A 199-amino-acid chain; its full sequence is NADH-quinone oxidoreductase subunit I (199 aa).

4Fe-4S ferredoxin-type domains are found at residues 45–75 (LNRHPDGLEKCIGCELCAWACPADAIYVEGA) and 91–120 (RVYQINYLRCIFCGYCIEACPTRALTMSNE). [4Fe-4S] cluster is bound by residues C55, C58, C61, C65, C100, C103, C106, and C110. Positions 164 to 199 (GTPAAHMLSGEDDAASETTLDRSDDHSATYEEAERP) are disordered. Basic and acidic residues predominate over residues 182–199 (TLDRSDDHSATYEEAERP).

It belongs to the complex I 23 kDa subunit family. NDH-1 is composed of 14 different subunits. Subunits NuoA, H, J, K, L, M, N constitute the membrane sector of the complex. The cofactor is [4Fe-4S] cluster.

It is found in the cell membrane. It catalyses the reaction a quinone + NADH + 5 H(+)(in) = a quinol + NAD(+) + 4 H(+)(out). Its function is as follows. NDH-1 shuttles electrons from NADH, via FMN and iron-sulfur (Fe-S) centers, to quinones in the respiratory chain. The immediate electron acceptor for the enzyme in this species is believed to be ubiquinone. Couples the redox reaction to proton translocation (for every two electrons transferred, four hydrogen ions are translocated across the cytoplasmic membrane), and thus conserves the redox energy in a proton gradient. The protein is NADH-quinone oxidoreductase subunit I of Acidothermus cellulolyticus (strain ATCC 43068 / DSM 8971 / 11B).